We begin with the raw amino-acid sequence, 206 residues long: Small ribosomal subunit protein uS4 (206 aa).

The region spanning 93-156 (CRLDNLVYRL…RKIKIIAEAL (64 aa)) is the S4 RNA-binding domain.

The protein belongs to the universal ribosomal protein uS4 family. As to quaternary structure, part of the 30S ribosomal subunit. Contacts protein S5. The interaction surface between S4 and S5 is involved in control of translational fidelity.

Functionally, one of the primary rRNA binding proteins, it binds directly to 16S rRNA where it nucleates assembly of the body of the 30S subunit. With S5 and S12 plays an important role in translational accuracy. The protein is Small ribosomal subunit protein uS4 of Protochlamydia amoebophila (strain UWE25).